A 343-amino-acid chain; its full sequence is 3-dehydroquinate synthase (343 aa).

Residues S61 to K66, G95 to D99, T119 to T120, K132, K141, and F159 to T162 each bind NAD(+). Zn(2+) is bound by residues E174, H231, and H248.

This sequence belongs to the sugar phosphate cyclases superfamily. Dehydroquinate synthase family. It depends on Co(2+) as a cofactor. Requires Zn(2+) as cofactor. NAD(+) serves as cofactor.

Its subcellular location is the cytoplasm. The catalysed reaction is 7-phospho-2-dehydro-3-deoxy-D-arabino-heptonate = 3-dehydroquinate + phosphate. The protein operates within metabolic intermediate biosynthesis; chorismate biosynthesis; chorismate from D-erythrose 4-phosphate and phosphoenolpyruvate: step 2/7. In terms of biological role, catalyzes the conversion of 3-deoxy-D-arabino-heptulosonate 7-phosphate (DAHP) to dehydroquinate (DHQ). This Helicobacter pylori (strain P12) protein is 3-dehydroquinate synthase.